Here is a 218-residue protein sequence, read N- to C-terminus: Hypoxanthine-guanine phosphoribosyltransferase (218 aa).

At Ala2 the chain carries N-acetylalanine. Lys69 is a binding site for GMP. Residue Lys103 is modified to N6-acetyllysine. Residue Lys115 forms a Glycyl lysine isopeptide (Lys-Gly) (interchain with G-Cter in SUMO1); alternate linkage. Residue Lys115 forms a Glycyl lysine isopeptide (Lys-Gly) (interchain with G-Cter in SUMO2); alternate linkage. GMP-binding positions include Glu134–Thr142, Lys166, Lys186–Val188, and Asp194. Residue Asp138 is the Proton acceptor of the active site. Phosphothreonine is present on Thr142. Residue Asp194 coordinates Mg(2+).

This sequence belongs to the purine/pyrimidine phosphoribosyltransferase family. As to quaternary structure, homotetramer. Mg(2+) serves as cofactor.

It localises to the cytoplasm. The catalysed reaction is IMP + diphosphate = hypoxanthine + 5-phospho-alpha-D-ribose 1-diphosphate. It catalyses the reaction GMP + diphosphate = guanine + 5-phospho-alpha-D-ribose 1-diphosphate. It functions in the pathway purine metabolism; IMP biosynthesis via salvage pathway; IMP from hypoxanthine: step 1/1. Functionally, converts guanine to guanosine monophosphate, and hypoxanthine to inosine monophosphate. Transfers the 5-phosphoribosyl group from 5-phosphoribosylpyrophosphate onto the purine. Plays a central role in the generation of purine nucleotides through the purine salvage pathway. This chain is Hypoxanthine-guanine phosphoribosyltransferase (HPRT1), found in Sus scrofa (Pig).